The following is a 206-amino-acid chain: dITP/XTP pyrophosphatase (206 aa).

Substrate is bound at residue 10–15 (SRNAKK). Aspartate 75 serves as the catalytic Proton acceptor. Aspartate 75 is a Mg(2+) binding site. Residues serine 76, 158–161 (FGYD), lysine 181, and 186–187 (HR) contribute to the substrate site.

The protein belongs to the HAM1 NTPase family. Homodimer. Requires Mg(2+) as cofactor.

It catalyses the reaction XTP + H2O = XMP + diphosphate + H(+). It carries out the reaction dITP + H2O = dIMP + diphosphate + H(+). The catalysed reaction is ITP + H2O = IMP + diphosphate + H(+). Pyrophosphatase that catalyzes the hydrolysis of nucleoside triphosphates to their monophosphate derivatives, with a high preference for the non-canonical purine nucleotides XTP (xanthosine triphosphate), dITP (deoxyinosine triphosphate) and ITP. Seems to function as a house-cleaning enzyme that removes non-canonical purine nucleotides from the nucleotide pool, thus preventing their incorporation into DNA/RNA and avoiding chromosomal lesions. The polypeptide is dITP/XTP pyrophosphatase (Nocardia farcinica (strain IFM 10152)).